A 315-amino-acid polypeptide reads, in one-letter code: 4-hydroxy-3-methylbut-2-enyl diphosphate reductase (315 aa).

Cys-18 contributes to the [4Fe-4S] cluster binding site. Residues His-47 and His-80 each contribute to the (2E)-4-hydroxy-3-methylbut-2-enyl diphosphate site. The dimethylallyl diphosphate site is built by His-47 and His-80. The isopentenyl diphosphate site is built by His-47 and His-80. [4Fe-4S] cluster is bound at residue Cys-102. Residue His-130 participates in (2E)-4-hydroxy-3-methylbut-2-enyl diphosphate binding. His-130 lines the dimethylallyl diphosphate pocket. An isopentenyl diphosphate-binding site is contributed by His-130. Residue Glu-132 is the Proton donor of the active site. Thr-171 serves as a coordination point for (2E)-4-hydroxy-3-methylbut-2-enyl diphosphate. Cys-201 provides a ligand contact to [4Fe-4S] cluster. (2E)-4-hydroxy-3-methylbut-2-enyl diphosphate contacts are provided by Ser-229, Ser-230, Asn-231, and Ser-274. Dimethylallyl diphosphate-binding residues include Ser-229, Ser-230, Asn-231, and Ser-274. The isopentenyl diphosphate site is built by Ser-229, Ser-230, Asn-231, and Ser-274.

The protein belongs to the IspH family. [4Fe-4S] cluster is required as a cofactor.

The catalysed reaction is isopentenyl diphosphate + 2 oxidized [2Fe-2S]-[ferredoxin] + H2O = (2E)-4-hydroxy-3-methylbut-2-enyl diphosphate + 2 reduced [2Fe-2S]-[ferredoxin] + 2 H(+). It carries out the reaction dimethylallyl diphosphate + 2 oxidized [2Fe-2S]-[ferredoxin] + H2O = (2E)-4-hydroxy-3-methylbut-2-enyl diphosphate + 2 reduced [2Fe-2S]-[ferredoxin] + 2 H(+). It participates in isoprenoid biosynthesis; dimethylallyl diphosphate biosynthesis; dimethylallyl diphosphate from (2E)-4-hydroxy-3-methylbutenyl diphosphate: step 1/1. It functions in the pathway isoprenoid biosynthesis; isopentenyl diphosphate biosynthesis via DXP pathway; isopentenyl diphosphate from 1-deoxy-D-xylulose 5-phosphate: step 6/6. Its function is as follows. Catalyzes the conversion of 1-hydroxy-2-methyl-2-(E)-butenyl 4-diphosphate (HMBPP) into a mixture of isopentenyl diphosphate (IPP) and dimethylallyl diphosphate (DMAPP). Acts in the terminal step of the DOXP/MEP pathway for isoprenoid precursor biosynthesis. This chain is 4-hydroxy-3-methylbut-2-enyl diphosphate reductase, found in Hyphomonas neptunium (strain ATCC 15444).